A 154-amino-acid chain; its full sequence is Small ribosomal subunit protein bS6 (154 aa).

A disordered region spans residues 97–154 (DSEPSAMMQKRDRDDRKDRERGRRRDDEGFGGGGGFGGDRGDRGDRGDRGERSFGGEG). Composition is skewed to basic and acidic residues over residues 105-124 (QKRD…RDDE) and 135-154 (DRGD…GGEG).

This sequence belongs to the bacterial ribosomal protein bS6 family.

Its function is as follows. Binds together with bS18 to 16S ribosomal RNA. The sequence is that of Small ribosomal subunit protein bS6 from Methylobacterium radiotolerans (strain ATCC 27329 / DSM 1819 / JCM 2831 / NBRC 15690 / NCIMB 10815 / 0-1).